Reading from the N-terminus, the 304-residue chain is Putative S-adenosyl-L-methionine-dependent methyltransferase MAV_4444 (304 aa).

S-adenosyl-L-methionine-binding positions include D130 and 159 to 160 (DL).

Belongs to the UPF0677 family.

Exhibits S-adenosyl-L-methionine-dependent methyltransferase activity. The sequence is that of Putative S-adenosyl-L-methionine-dependent methyltransferase MAV_4444 from Mycobacterium avium (strain 104).